Here is a 301-residue protein sequence, read N- to C-terminus: HPr kinase/phosphorylase (301 aa).

Catalysis depends on residues His134 and Lys155. 149–156 is an ATP binding site; it reads GKSGLGKS. Ser156 contributes to the Mg(2+) binding site. The Proton acceptor; for phosphorylation activity. Proton donor; for dephosphorylation activity role is filled by Asp173. The interval 196–205 is important for the catalytic mechanism of both phosphorylation and dephosphorylation; the sequence is LEVRGLGIIN. Glu197 contributes to the Mg(2+) binding site. Residue Arg239 is part of the active site. Residues 260-265 are important for the catalytic mechanism of dephosphorylation; sequence PITPGK.

The protein belongs to the HPrK/P family. Homohexamer. Requires Mg(2+) as cofactor.

It catalyses the reaction [HPr protein]-L-serine + ATP = [HPr protein]-O-phospho-L-serine + ADP + H(+). It carries out the reaction [HPr protein]-O-phospho-L-serine + phosphate + H(+) = [HPr protein]-L-serine + diphosphate. In terms of biological role, catalyzes the ATP- as well as the pyrophosphate-dependent phosphorylation of a specific serine residue in HPr, a phosphocarrier protein of the phosphoenolpyruvate-dependent sugar phosphotransferase system (PTS). HprK/P also catalyzes the pyrophosphate-producing, inorganic phosphate-dependent dephosphorylation (phosphorolysis) of seryl-phosphorylated HPr (P-Ser-HPr). The two antagonistic activities of HprK/P are regulated by several intracellular metabolites, which change their concentration in response to the absence or presence of rapidly metabolisable carbon sources (glucose, fructose, etc.) in the growth medium. Therefore, by controlling the phosphorylation state of HPr, HPrK/P is a sensor enzyme that plays a major role in the regulation of carbon metabolism and sugar transport: it mediates carbon catabolite repression (CCR), and regulates PTS-catalyzed carbohydrate uptake and inducer exclusion. This is HPr kinase/phosphorylase from Malacoplasma penetrans (strain HF-2) (Mycoplasma penetrans).